The primary structure comprises 509 residues: MDIRAAEISAILKEQIKNFGKEAEVSEVGQVLSVGDGIARVYGLDNVQAGEMVEFPGGIRGMALNLESDNVGVVIFGADRDIKEGDIVKRTGAIVDVPVGPGLLGRVVDALGNPIDGKGPIVATERRRVDVKAPGIIPRKSVHEPMSTGLKAVDALIPVGRGQRELVIGDRQTGKTAIILDTFLNQKPIHDNGPDSEKLYCVYVAIGQKRSTVAQFVKVLEERGALEYSIVIAATASDPAPMQYLAPFAGCAMGEYFRDNSMHALIGYDDLSKQAVAYRQMSLLLRRPPGREAYPGDVFYLHSRLLERAAKLNDENGAGSLTALPVIETQGNDVSAFIPTNVISITDGQIFLETNLFYQGIRPAVNVGLSVSRVGSSAQVKAMKQVAGSIKGELAQYREMAAFAQFGSDLDASTQRLLNRGARLTELLKQPQFSPLKTEEQVAVIFAGVNGYLDKIAVNQVGKFEAGLLSSLRTEHKDVLDAIRDEKALTDNIKAKLKAAVDAFAKSFA.

Residue 169–176 participates in ATP binding; that stretch reads GDRQTGKT.

This sequence belongs to the ATPase alpha/beta chains family. F-type ATPases have 2 components, CF(1) - the catalytic core - and CF(0) - the membrane proton channel. CF(1) has five subunits: alpha(3), beta(3), gamma(1), delta(1), epsilon(1). CF(0) has three main subunits: a(1), b(2) and c(9-12). The alpha and beta chains form an alternating ring which encloses part of the gamma chain. CF(1) is attached to CF(0) by a central stalk formed by the gamma and epsilon chains, while a peripheral stalk is formed by the delta and b chains.

The protein resides in the cell inner membrane. It catalyses the reaction ATP + H2O + 4 H(+)(in) = ADP + phosphate + 5 H(+)(out). In terms of biological role, produces ATP from ADP in the presence of a proton gradient across the membrane. The alpha chain is a regulatory subunit. The sequence is that of ATP synthase subunit alpha from Brucella anthropi (strain ATCC 49188 / DSM 6882 / CCUG 24695 / JCM 21032 / LMG 3331 / NBRC 15819 / NCTC 12168 / Alc 37) (Ochrobactrum anthropi).